The following is a 582-amino-acid chain: Phosphoglucomutase, cytoplasmic (582 aa).

Alpha-D-glucose 1,6-bisphosphate is bound by residues Arg25 and Ser124. Catalysis depends on Ser124, which acts as the Phosphoserine intermediate. Mg(2+)-binding residues include Ser124, Asp299, Asp301, and Asp303. Ser124 is subject to Phosphoserine. Alpha-D-glucose 1,6-bisphosphate contacts are provided by Asp303, Arg304, Thr367, Glu386, Ser388, and Lys399.

This sequence belongs to the phosphohexose mutase family. In terms of assembly, monomer. It depends on Mg(2+) as a cofactor.

It localises to the cytoplasm. The enzyme catalyses alpha-D-glucose 1-phosphate = alpha-D-glucose 6-phosphate. It catalyses the reaction O-phospho-L-seryl-[protein] + alpha-D-glucose 1-phosphate = alpha-D-glucose 1,6-bisphosphate + L-seryl-[protein]. It carries out the reaction alpha-D-glucose 1,6-bisphosphate + L-seryl-[protein] = O-phospho-L-seryl-[protein] + alpha-D-glucose 6-phosphate. Its function is as follows. Catalyzes the reversible isomerization of alpha-D-glucose 1-phosphate to alpha-D-glucose 6-phosphate. The mechanism proceeds via the intermediate compound alpha-D-glucose 1,6-bisphosphate. This enzyme participates in both the breakdown and synthesis of glucose. The chain is Phosphoglucomutase, cytoplasmic (PGM1) from Populus tremula (European aspen).